We begin with the raw amino-acid sequence, 101 residues long: Aspartyl/glutamyl-tRNA(Asn/Gln) amidotransferase subunit C (101 aa).

The protein belongs to the GatC family. In terms of assembly, heterotrimer of A, B and C subunits.

It carries out the reaction L-glutamyl-tRNA(Gln) + L-glutamine + ATP + H2O = L-glutaminyl-tRNA(Gln) + L-glutamate + ADP + phosphate + H(+). The enzyme catalyses L-aspartyl-tRNA(Asn) + L-glutamine + ATP + H2O = L-asparaginyl-tRNA(Asn) + L-glutamate + ADP + phosphate + 2 H(+). Functionally, allows the formation of correctly charged Asn-tRNA(Asn) or Gln-tRNA(Gln) through the transamidation of misacylated Asp-tRNA(Asn) or Glu-tRNA(Gln) in organisms which lack either or both of asparaginyl-tRNA or glutaminyl-tRNA synthetases. The reaction takes place in the presence of glutamine and ATP through an activated phospho-Asp-tRNA(Asn) or phospho-Glu-tRNA(Gln). The polypeptide is Aspartyl/glutamyl-tRNA(Asn/Gln) amidotransferase subunit C (Enterococcus faecalis (strain ATCC 700802 / V583)).